The following is a 245-amino-acid chain: Ribonuclease PH (245 aa).

Residues arginine 87 and glycine 125–arginine 127 contribute to the phosphate site.

Belongs to the RNase PH family. In terms of assembly, homohexameric ring arranged as a trimer of dimers.

It carries out the reaction tRNA(n+1) + phosphate = tRNA(n) + a ribonucleoside 5'-diphosphate. In terms of biological role, phosphorolytic 3'-5' exoribonuclease that plays an important role in tRNA 3'-end maturation. Removes nucleotide residues following the 3'-CCA terminus of tRNAs; can also add nucleotides to the ends of RNA molecules by using nucleoside diphosphates as substrates, but this may not be physiologically important. Probably plays a role in initiation of 16S rRNA degradation (leading to ribosome degradation) during starvation. The protein is Ribonuclease PH of Streptomyces griseus subsp. griseus (strain JCM 4626 / CBS 651.72 / NBRC 13350 / KCC S-0626 / ISP 5235).